The primary structure comprises 249 residues: Small ribosomal subunit protein eS6 (249 aa).

Over residues arginine 216 to alanine 229 the composition is skewed to basic and acidic residues. The disordered stretch occupies residues arginine 216–lysine 249. A phosphoserine mark is found at serine 235, serine 236, serine 240, serine 244, and serine 247. Over residues serine 236–lysine 249 the composition is skewed to low complexity.

It belongs to the eukaryotic ribosomal protein eS6 family. Component of the small ribosomal subunit. Part of the small subunit (SSU) processome, composed of more than 70 proteins and the RNA chaperone small nucleolar RNA (snoRNA) U3. Ribosomal protein S6 is the major substrate of protein kinases in eukaryote ribosomes. The phosphorylation is stimulated by growth factors, tumor promoting agents, and mitogens. It is dephosphorylated at growth arrest.

The protein localises to the cytoplasm. The protein resides in the nucleus. It is found in the nucleolus. Its function is as follows. Component of the 40S small ribosomal subunit. Plays an important role in controlling cell growth and proliferation through the selective translation of particular classes of mRNA. Part of the small subunit (SSU) processome, first precursor of the small eukaryotic ribosomal subunit. During the assembly of the SSU processome in the nucleolus, many ribosome biogenesis factors, an RNA chaperone and ribosomal proteins associate with the nascent pre-rRNA and work in concert to generate RNA folding, modifications, rearrangements and cleavage as well as targeted degradation of pre-ribosomal RNA by the RNA exosome. This chain is Small ribosomal subunit protein eS6 (RPS6), found in Gallus gallus (Chicken).